The following is a 171-amino-acid chain: uncharacterized protein (171 aa).

In terms of biological role, required for production of the bacteriocin SkfA. This is an uncharacterized protein from Bacillus subtilis (strain 168).